Reading from the N-terminus, the 472-residue chain is Eukaryotic translation initiation factor 2 subunit 3 (472 aa).

The 209-residue stretch at 39 to 247 folds into the tr-type G domain; that stretch reads QATINIGTIG…YIVNKIPVPV (209 aa). Residues 48 to 55 form a G1 region; the sequence is GHVAHGKS. 51–56 is a GTP binding site; it reads AHGKST. The segment at 76–80 is G2; the sequence is NITIK. Residues 134-137 are G3; it reads DCPG. GTP contacts are provided by residues 190 to 193 and 225 to 227; these read NKID and SAQ. Positions 190-193 are G4; the sequence is NKID. Positions 225-227 are G5; it reads SAQ. Residues 457-469 form an interacts with cdc123 region; sequence GQIRRGVTITPTV.

Belongs to the TRAFAC class translation factor GTPase superfamily. Classic translation factor GTPase family. EIF2G subfamily. In terms of assembly, eukaryotic translation initiation factor 2 eIF2 is a heterotrimeric complex composed of an alpha (EIF2S1), a beta (EIF2S2) and a gamma (EIF2S3) chain. eIF2 is member of the 43S pre-initiation complex (43S PIC).

Its subcellular location is the cytoplasm. The protein localises to the cytosol. It carries out the reaction GTP + H2O = GDP + phosphate + H(+). In terms of biological role, member of the eIF2 complex that functions in the early steps of protein synthesis by forming a ternary complex with GTP and initiator tRNA. This complex binds to a 40S ribosomal subunit, followed by mRNA binding to form the 43S pre-initiation complex (43S PIC). Junction of the 60S ribosomal subunit to form the 80S initiation complex is preceded by hydrolysis of the GTP bound to eIF2 and release of an eIF2-GDP binary complex. In order for eIF2 to recycle and catalyze another round of initiation, the GDP bound to eIF2 must exchange with GTP by way of a reaction catalyzed by eIF-2B. This Danio rerio (Zebrafish) protein is Eukaryotic translation initiation factor 2 subunit 3.